We begin with the raw amino-acid sequence, 300 residues long: Tyrosine recombinase XerC (300 aa).

The region spanning 1 to 86 (MESVLDAFDQ…AVKTFTAWAV (86 aa)) is the Core-binding (CB) domain. A Tyr recombinase domain is found at 107–294 (TLPAVLRQDQ…TVARLRAVHD (188 aa)). Residues Arg-151, Lys-175, His-246, Arg-249, and His-272 contribute to the active site. Tyr-281 acts as the O-(3'-phospho-DNA)-tyrosine intermediate in catalysis.

Belongs to the 'phage' integrase family. XerC subfamily. As to quaternary structure, forms a cyclic heterotetrameric complex composed of two molecules of XerC and two molecules of XerD.

The protein localises to the cytoplasm. In terms of biological role, site-specific tyrosine recombinase, which acts by catalyzing the cutting and rejoining of the recombining DNA molecules. The XerC-XerD complex is essential to convert dimers of the bacterial chromosome into monomers to permit their segregation at cell division. It also contributes to the segregational stability of plasmids. This chain is Tyrosine recombinase XerC, found in Mycobacterium sp. (strain JLS).